We begin with the raw amino-acid sequence, 75 residues long: Sec-independent protein translocase protein TatA (75 aa).

Residues 1-21 traverse the membrane as a helical segment; the sequence is MGSFSIWHWLIVLVIIALVFG. Residues 45 to 75 are disordered; it reads DASADKPADQVTQQRVSDDTIDVQAKEKSNS.

Belongs to the TatA/E family. The Tat system comprises two distinct complexes: a TatABC complex, containing multiple copies of TatA, TatB and TatC subunits, and a separate TatA complex, containing only TatA subunits. Substrates initially bind to the TatABC complex, which probably triggers association of the separate TatA complex to form the active translocon.

Its subcellular location is the cell inner membrane. Its function is as follows. Part of the twin-arginine translocation (Tat) system that transports large folded proteins containing a characteristic twin-arginine motif in their signal peptide across membranes. TatA could form the protein-conducting channel of the Tat system. This is Sec-independent protein translocase protein TatA from Bordetella bronchiseptica (strain ATCC BAA-588 / NCTC 13252 / RB50) (Alcaligenes bronchisepticus).